A 375-amino-acid polypeptide reads, in one-letter code: 2-isopropylmalate synthase (375 aa).

A Pyruvate carboxyltransferase domain is found at 1–124; that stretch reads GRTSIDNLCR…FTNIKHNELY (124 aa). 3 residues coordinate Mn(2+): H59, H61, and N95. A regulatory domain region spans residues 250–375; the sequence is QLKYFSIHSG…SKIKNIKNKK (126 aa).

This sequence belongs to the alpha-IPM synthase/homocitrate synthase family. LeuA type 1 subfamily. Homodimer.

The protein localises to the cytoplasm. It carries out the reaction 3-methyl-2-oxobutanoate + acetyl-CoA + H2O = (2S)-2-isopropylmalate + CoA + H(+). It functions in the pathway amino-acid biosynthesis; L-leucine biosynthesis; L-leucine from 3-methyl-2-oxobutanoate: step 1/4. Catalyzes the condensation of the acetyl group of acetyl-CoA with 3-methyl-2-oxobutanoate (2-ketoisovalerate) to form 3-carboxy-3-hydroxy-4-methylpentanoate (2-isopropylmalate). This chain is 2-isopropylmalate synthase, found in Buchnera aphidicola subsp. Thelaxes suberi.